Reading from the N-terminus, the 302-residue chain is RNA polymerase II holoenzyme cyclin-like subunit (302 aa).

The Cyclin N-terminal domain maps to 53–142 (QQLIKLGKRM…VGECEFSLIS (90 aa)).

Belongs to the cyclin family. Cyclin C subfamily. As to quaternary structure, component of the srb8-11 complex, a regulatory module of the Mediator complex.

Its subcellular location is the nucleus. Functionally, component of the srb8-11 complex. The srb8-11 complex is a regulatory module of the Mediator complex which is itself involved in regulation of basal and activated RNA polymerase II-dependent transcription. The srb8-11 complex may be involved in the transcriptional repression of a subset of genes regulated by Mediator. It may inhibit the association of the Mediator complex with RNA polymerase II to form the holoenzyme complex. The srb8-11 complex phosphorylates the C-terminal domain (CTD) of the largest subunit of RNA polymerase II. The sequence is that of RNA polymerase II holoenzyme cyclin-like subunit (ssn8) from Emericella nidulans (strain FGSC A4 / ATCC 38163 / CBS 112.46 / NRRL 194 / M139) (Aspergillus nidulans).